A 452-amino-acid polypeptide reads, in one-letter code: THO complex subunit 5A (452 aa).

The protein belongs to the THOC5 family. Component of the THO complex, which is composed of THO1, THO2, THO3, THO5, THO6 and THO7.

Its subcellular location is the nucleus. Acts as a component of the THO subcomplex of the TREX complex which is thought to couple mRNA transcription, processing and nuclear export. The polypeptide is THO complex subunit 5A (THO5A) (Arabidopsis thaliana (Mouse-ear cress)).